The chain runs to 434 residues: GPI mannosyltransferase 2 (434 aa).

A run of 10 helical transmembrane segments spans residues 22-42 (LSLA…GCPG), 109-129 (ILSF…SVLA), 145-165 (GALI…GAFL), 170-190 (GESL…SSLL), 210-230 (LFSI…LFAF), 252-272 (LGVI…PQWI), 311-331 (YWTL…FLMC), 354-374 (LAAP…VQII), 377-397 (ISSG…SHVA), and 411-431 (IAIQ…GSFL).

The protein belongs to the PIGV family.

Its subcellular location is the endoplasmic reticulum membrane. It functions in the pathway glycolipid biosynthesis; glycosylphosphatidylinositol-anchor biosynthesis. Mannosyltransferase involved in glycosylphosphatidylinositol-anchor biosynthesis. Transfers the second mannose to the glycosylphosphatidylinositol during GPI precursor assembly. This chain is GPI mannosyltransferase 2 (gpi18), found in Aspergillus oryzae (strain ATCC 42149 / RIB 40) (Yellow koji mold).